We begin with the raw amino-acid sequence, 259 residues long: Ribosomal RNA small subunit methyltransferase J (259 aa).

S-adenosyl-L-methionine contacts are provided by residues 109 to 110 (RD), 125 to 126 (ER), 161 to 162 (SS), and aspartate 179.

It belongs to the methyltransferase superfamily. RsmJ family.

The protein localises to the cytoplasm. The catalysed reaction is guanosine(1516) in 16S rRNA + S-adenosyl-L-methionine = N(2)-methylguanosine(1516) in 16S rRNA + S-adenosyl-L-homocysteine + H(+). Functionally, specifically methylates the guanosine in position 1516 of 16S rRNA. This Shewanella putrefaciens (strain CN-32 / ATCC BAA-453) protein is Ribosomal RNA small subunit methyltransferase J.